A 270-amino-acid chain; its full sequence is uncharacterized protein (270 aa).

The Cytoplasmic portion of the chain corresponds to 1 to 37 (MATHTSKRRIHRWENNELSEENSTIIYFPARGLMWTH). Residues 38–58 (FPFVLGICLEFVGYVLKIVFI) form a helical membrane-spanning segment. The Extracellular portion of the chain corresponds to 59 to 65 (NSPSIST). Residues 66 to 86 (FIAQSVLLLIAPSLYALSIFM) traverse the membrane as a helical segment. The Cytoplasmic portion of the chain corresponds to 87–93 (LFSKMAR). The helical transmembrane segment at 94-114 (LILMEAYMLIPAKFSTVSFVV) threads the bilayer. Residues 115–140 (ADMIGRVLQAVGGGLLSSWNSRNTGR) lie on the Extracellular side of the membrane. The chain crosses the membrane as a helical span at residues 141–161 (ILIIVGLFIQIFCYTFLTFSQ). Over 162-181 (LFLHYKMKATPSKIVRDSNE) the chain is Cytoplasmic. The helical transmembrane segment at 182–202 (WFQYNFILLAGILLVNGRTIV) threads the bilayer. At 203 to 220 (RVVQFLMGLQSYIGQHEW) the chain is on the extracellular side. A helical membrane pass occupies residues 221 to 241 (CLYVFDTVLMFLLPLIFLATF). Residues 242-270 (RARNLFKLQDKSVNIQLNKLLDKESVSED) lie on the Cytoplasmic side of the membrane.

This sequence belongs to the lipid-translocating exporter (LTE) (TC 9.A.26.1) family.

It localises to the membrane. This is an uncharacterized protein from Saccharomyces cerevisiae (strain ATCC 204508 / S288c) (Baker's yeast).